Here is a 319-residue protein sequence, read N- to C-terminus: Lipopolysaccharide heptosyltransferase 1 (319 aa).

ADP-L-glycero-beta-D-manno-heptose contacts are provided by Thr187, Thr188, Lys192, Glu222, Met242, Asp261, Thr262, Gly263, and His266.

The protein belongs to the glycosyltransferase 9 family.

The protein localises to the cell inner membrane. It carries out the reaction an alpha-Kdo-(2-&gt;4)-alpha-Kdo-(2-&gt;6)-lipid A + ADP-L-glycero-beta-D-manno-heptose = an L-alpha-D-Hep-(1-&gt;5)-[alpha-Kdo-(2-&gt;4)]-alpha-Kdo-(2-&gt;6)-lipid A + ADP + H(+). It catalyses the reaction alpha-Kdo-(2-&gt;4)-alpha-Kdo-(2-&gt;6)-lipid A (E. coli) + ADP-L-glycero-beta-D-manno-heptose = L-alpha-D-Hep-(1-&gt;5)-[alpha-Kdo-(2-&gt;4)]-alpha-Kdo-(2-&gt;6)-lipid A (E. coli) + ADP + H(+). It participates in bacterial outer membrane biogenesis; LPS core biosynthesis. Its function is as follows. Glycosyltransferase involved in the biosynthesis of the core oligosaccharide region of lipopolysaccharide (LPS). Catalyzes the addition of the first heptose unit to one 3-deoxy-D-manno-octulosonic acid (Kdo) residue of the Kdo2-lipid A module. The analog ADP-mannose can serve as an alternative donor in place of ADP-L-glycero-D-manno-heptose for the glycosylation of Kdo2-lipid A. Displays no activity with ADP-glucose, GDP-mannose, UDP-glucose or UDP-galactose. The sequence is that of Lipopolysaccharide heptosyltransferase 1 from Escherichia coli (strain K12).